The chain runs to 249 residues: Carboxy-S-adenosyl-L-methionine synthase (249 aa).

S-adenosyl-L-methionine-binding positions include Y39, G64–S66, D117–I118, N132, and R199.

Belongs to the class I-like SAM-binding methyltransferase superfamily. Cx-SAM synthase family. In terms of assembly, homodimer.

It carries out the reaction prephenate + S-adenosyl-L-methionine = carboxy-S-adenosyl-L-methionine + 3-phenylpyruvate + H2O. Catalyzes the conversion of S-adenosyl-L-methionine (SAM) to carboxy-S-adenosyl-L-methionine (Cx-SAM). This Aeromonas hydrophila subsp. hydrophila (strain ATCC 7966 / DSM 30187 / BCRC 13018 / CCUG 14551 / JCM 1027 / KCTC 2358 / NCIMB 9240 / NCTC 8049) protein is Carboxy-S-adenosyl-L-methionine synthase.